Reading from the N-terminus, the 355-residue chain is 3-dehydroquinate synthase (355 aa).

Residues Glu71–Lys76, Gly105–Asp109, Thr129–Ser130, Lys142, and Lys151 contribute to the NAD(+) site. Residues Glu184, His246, and His263 each coordinate Zn(2+).

The protein belongs to the sugar phosphate cyclases superfamily. Dehydroquinate synthase family. Requires Co(2+) as cofactor. It depends on Zn(2+) as a cofactor. NAD(+) is required as a cofactor.

The protein localises to the cytoplasm. It catalyses the reaction 7-phospho-2-dehydro-3-deoxy-D-arabino-heptonate = 3-dehydroquinate + phosphate. The protein operates within metabolic intermediate biosynthesis; chorismate biosynthesis; chorismate from D-erythrose 4-phosphate and phosphoenolpyruvate: step 2/7. Functionally, catalyzes the conversion of 3-deoxy-D-arabino-heptulosonate 7-phosphate (DAHP) to dehydroquinate (DHQ). This is 3-dehydroquinate synthase from Streptococcus pneumoniae (strain Hungary19A-6).